The primary structure comprises 365 residues: Cobalt-precorrin-5B C(1)-methyltransferase (365 aa).

Belongs to the CbiD family.

The catalysed reaction is Co-precorrin-5B + S-adenosyl-L-methionine = Co-precorrin-6A + S-adenosyl-L-homocysteine. The protein operates within cofactor biosynthesis; adenosylcobalamin biosynthesis; cob(II)yrinate a,c-diamide from sirohydrochlorin (anaerobic route): step 6/10. Catalyzes the methylation of C-1 in cobalt-precorrin-5B to form cobalt-precorrin-6A. The polypeptide is Cobalt-precorrin-5B C(1)-methyltransferase (Methanococcus maripaludis (strain C5 / ATCC BAA-1333)).